A 353-amino-acid polypeptide reads, in one-letter code: Tsukushi (353 aa).

Positions 1–16 are cleaved as a signal peptide; it reads MPWPLLLLLAVSGAQT. The region spanning 17–58 is the LRRNT domain; that stretch reads TRPCFPGCQCEVETFGLFDSFSLTRVDCSGLGPHIMPVPIPL. LRR repeat units lie at residues 59-80, 85-106, 109-130, 132-153, 159-179, 185-206, 207-227, 230-249, 255-276, and 280-301; these read DTAHLDLSSNRLEMVNESVLAG, TLAGLDLSHNLLTSISPTAFSR, YLESLDLSHNGLTALPAESFTS, PLSDVNLSHNQLREVSVSAFTT, ALHVDLSHNLIHRLVPHPTRA, TIQSLNLAWNRLHAVPNLRDLP, LRYLSLDGNPLAVIGPGAFAG, GLTHLSLASLQRLPELAPSG, GLQVLDLSGNPKLNWAGAEVFS, and SLQELDLSGTNLVPLPEALLLH. A glycan (N-linked (GlcNAc...) asparagine) is linked at Asn-74. Asn-137 carries an N-linked (GlcNAc...) asparagine glycan.

In terms of assembly, interacts with FZD4 (via FZ domain); competes with WNT2B for binding to FZD4, inhibiting Wnt signaling and repressing peripheral eye development. Interacts with TGFB1; the interaction contributes to regulation of the hair cycle. Interacts with netrin. Interacts with CCN2.

It is found in the secreted. Contributes to various developmental events and other processes such as wound healing and cholesterol homeostasis through its interactions with multiple signaling pathways. Wnt signaling inhibitor which competes with WNT2B for binding to Wnt receptor FZD4 and represses WNT2B-dependent development of the peripheral eye. Plays a role in regulating the hair cycle by controlling TGFB1 signaling. Required for the development of the anterior commissure in the brain by inhibiting neurite outgrowth. Essential for terminal differentiation of hippocampal neural stem cells. Plays a role in regulating bone elongation and bone mass by modulating growth plate chondrocyte function and overall body size. Required for development of the inner ear through its involvement in stereocilia formation in inner hair cells. Facilitates wound healing by inhibiting secretion of TGFB1 from macrophages which prevents myofibroblast differentiation, maintaining inflammatory cell quiescence. Plays a role in cholesterol homeostasis by reducing circulating high-density lipoprotein cholesterol, lowering cholesterol efflux capacity and decreasing cholesterol-to-bile acid conversion in the liver. In one study, shown to negatively regulate sympathetic innervation in brown fat, leading to reduced energy expenditure. In another study, shown not to affect brown fat thermogenic capacity, body weight gain or glucose homeostasis. This Homo sapiens (Human) protein is Tsukushi (TSKU).